Consider the following 479-residue polypeptide: GTPase Obg (479 aa).

The region spanning 2–159 (PRFVDRVVIH…RDLTLELKSV (158 aa)) is the Obg domain. An OBG-type G domain is found at 160-341 (ADVGLIGFPS…LIFGLWQMIS (182 aa)). GTP-binding positions include 166–173 (GFPSAGKS), 191–195 (FTTLV), 212–215 (DVPG), 292–295 (NKID), and 322–324 (STV). Residues Ser-173 and Thr-193 each coordinate Mg(2+). The OCT domain occupies 359–437 (PVPVDDSGFT…IGGMTFDWEP (79 aa)). The tract at residues 438–479 (QKPAGHPVAMSGRGTDARLESTDPVGTAERKVARHQRHKHGG) is disordered. The segment covering 469–479 (VARHQRHKHGG) has biased composition (basic residues).

The protein belongs to the TRAFAC class OBG-HflX-like GTPase superfamily. OBG GTPase family. Monomer. The cofactor is Mg(2+).

The protein resides in the cytoplasm. An essential GTPase which binds GTP, GDP and possibly (p)ppGpp with moderate affinity, with high nucleotide exchange rates and a fairly low GTP hydrolysis rate. Plays a role in control of the cell cycle, stress response, ribosome biogenesis and in those bacteria that undergo differentiation, in morphogenesis control. The chain is GTPase Obg from Mycobacterium leprae (strain Br4923).